Reading from the N-terminus, the 190-residue chain is Transcription termination/antitermination protein NusG (190 aa).

Residues 138 to 166 (VGEIVTVTEGPFETFTGTVEEVDQEKARL) form the KOW domain.

Belongs to the NusG family.

Participates in transcription elongation, termination and antitermination. The sequence is that of Transcription termination/antitermination protein NusG from Rickettsia bellii (strain RML369-C).